The primary structure comprises 246 residues: Transcription factor A, mitochondrial (246 aa).

A mitochondrion-targeting transit peptide spans 1–42 (MALLRGVWGVLSALGKSGADLCAVCGSRLRSPFSFAYVPRWF). A DNA-binding region (HMG box 1) is located at residues 50-118 (PKKPMTSYVR…VYKEEVNRIQ (69 aa)). 2 positions are modified to phosphoserine; by PKA: Ser56 and Ser61. A Phosphothreonine modification is found at Thr122. Positions 155–219 (PKRPRSAYNI…RYYNEMKSWE (65 aa)) form a DNA-binding region, HMG box 2. Ser160 carries the phosphoserine; by PKA modification. Phosphoserine occurs at positions 193 and 195.

Monomer; binds DNA as a monomer. Homodimer. Component of the mitochondrial transcription initiation complex, composed at least of TFB2M, TFAM and POLRMT. In this complex TFAM recruits POLRMT to the promoter whereas TFB2M induces structural changes in POLRMT to enable promoter opening and trapping of the DNA non-template strand. Upon metabolic stress, forms a complex composed of FOXO3, SIRT3, TFAM and POLRMT. Interacts with TFB1M and TFB2M. Interacts with CLPX; this enhances DNA-binding. Phosphorylation by PKA within the HMG box 1 impairs DNA binding and promotes degradation by the AAA+ Lon protease.

It localises to the mitochondrion. The protein resides in the mitochondrion matrix. It is found in the mitochondrion nucleoid. Functionally, binds to the mitochondrial light strand promoter and functions in mitochondrial transcription regulation. Component of the mitochondrial transcription initiation complex, composed at least of TFB2M, TFAM and POLRMT that is required for basal transcription of mitochondrial DNA. In this complex, TFAM recruits POLRMT to a specific promoter whereas TFB2M induces structural changes in POLRMT to enable promoter opening and trapping of the DNA non-template strand. Required for accurate and efficient promoter recognition by the mitochondrial RNA polymerase. Promotes transcription initiation from the HSP1 and the light strand promoter by binding immediately upstream of transcriptional start sites. Is able to unwind DNA. Bends the mitochondrial light strand promoter DNA into a U-turn shape via its HMG boxes. Required for maintenance of normal levels of mitochondrial DNA. May play a role in organizing and compacting mitochondrial DNA. In Sus scrofa (Pig), this protein is Transcription factor A, mitochondrial.